The primary structure comprises 347 residues: Phenylalanine--tRNA ligase alpha subunit (347 aa).

A Mg(2+)-binding site is contributed by glutamate 261.

This sequence belongs to the class-II aminoacyl-tRNA synthetase family. Phe-tRNA synthetase alpha subunit type 1 subfamily. As to quaternary structure, tetramer of two alpha and two beta subunits. The cofactor is Mg(2+).

It is found in the cytoplasm. The enzyme catalyses tRNA(Phe) + L-phenylalanine + ATP = L-phenylalanyl-tRNA(Phe) + AMP + diphosphate + H(+). This Streptococcus thermophilus (strain ATCC BAA-491 / LMD-9) protein is Phenylalanine--tRNA ligase alpha subunit.